A 648-amino-acid chain; its full sequence is PAN2-PAN3 deadenylation complex subunit PAN3 (648 aa).

Residues 1–24 (MAATRYPPNDLRRQVGSPRSKGRE) form a disordered region. Residues 24 to 53 (ENKDTLCRNILIYGNCRYEDQGCTFNHDQN) form a C3H1-type zinc finger. The pseudokinase domain stretch occupies residues 244–506 (QVMPNSGLPQ…SIENFISGIA (263 aa)). ATP-binding positions include Arg-295, 345 to 352 (DYHPLSKT), and 404 to 405 (SK). The stretch at 507-545 (THMTAFFDLALQDGDEKQFHLARELENGRIARSMMKLMT) forms a coiled coil. Positions 546 to 648 (IIERAEPGGA…SKTGAPGANN (103 aa)) are knob domain.

This sequence belongs to the protein kinase superfamily. PAN3 family. In terms of assembly, homodimer. Forms a heterotrimer with a catalytic subunit PAN2 to form the poly(A)-nuclease (PAN) deadenylation complex. Interacts (via PAM-2 motif) with poly(A)-binding protein PAB1 (via PABC domain), conferring substrate specificity of the enzyme complex.

It localises to the cytoplasm. Functionally, regulatory subunit of the poly(A)-nuclease (PAN) deadenylation complex, one of two cytoplasmic mRNA deadenylases involved in mRNA turnover. PAN specifically shortens poly(A) tails of RNA and the activity is stimulated by poly(A)-binding protein PAB1. PAN deadenylation is followed by rapid degradation of the shortened mRNA tails by the CCR4-NOT complex. Deadenylated mRNAs are then degraded by two alternative mechanisms, namely exosome-mediated 3'-5' exonucleolytic degradation, or deadenylation-dependent mRNA decaping and subsequent 5'-3' exonucleolytic degradation by XRN1. May also be involved in post-transcriptional maturation of mRNA poly(A) tails. PAN3 acts as a positive regulator for PAN activity, recruiting the catalytic subunit PAN2 to mRNA via its interaction with RNA and with PAB1. The sequence is that of PAN2-PAN3 deadenylation complex subunit PAN3 from Chaetomium globosum (strain ATCC 6205 / CBS 148.51 / DSM 1962 / NBRC 6347 / NRRL 1970) (Soil fungus).